A 221-amino-acid polypeptide reads, in one-letter code: Max dimerization protein 1 (221 aa).

The Nuclear localization signal signature appears at 21 to 49; sequence RREREAEHGYASMLPYNSKERDGLKRKSK. 2 disordered regions span residues 28–67 and 176–202; these read HGYASMLPYNSKERDGLKRKSKSKKSSNSRSTHNEMEKNR and DWSSSSSSVSDLDERGSMQSICSDEGY. The bHLH domain occupies 55 to 107; sequence NSRSTHNEMEKNRRAHLRLCLEKLKILVPLGPESNRHTTLSLLTRAKSHIKKL. Polar residues predominate over residues 192–202; the sequence is SMQSICSDEGY.

As to quaternary structure, efficient DNA binding requires dimerization with another bHLH protein. Binds DNA as a heterodimer with MAX.

It is found in the nucleus. Transcriptional repressor. MAD binds with MAX to form a sequence-specific DNA-binding protein complex which recognizes the core sequence 5'-CAC[GA]TG-3'. MAD thus antagonizes MYC transcriptional activity by competing for MAX. The sequence is that of Max dimerization protein 1 (mxd1) from Xenopus tropicalis (Western clawed frog).